Here is a 1464-residue protein sequence, read N- to C-terminus: MSDKFKLLLKQIHFPQHEEAYNEIKSGSIESVKLFKSKRQWFFVFSFRNLLSYETFTLFDNLLHSSFDSLGAKVSYMINVEDISCDQSLLEAYFSYALDILKSSHFSIYSLFSNLGIEISNNSISVKAPAHILRENLHERFIALIADVLSNVGLSNVSISVLEDKEASSSLEEAYETNKISLQEEAESQARQALQSIVQSSPVPPPQKHQAQNFAEKQSQRVASFDKAEITPMIEVNSEENRIVFEGYIFDVEQRETKTGRIIINFKVTDYTSSFAMQRWVKDSEELVKFGMIKKGNWVRVRGRIENNPFTHSLTMNVQDIKEISHTPRKDLMPEGQKRVEFHAHTNMSTMDAIPTVEELIDTAAFWGHPAVAITDHANVQSFPHGYHKAKKAGIKAIFGLEANLVEDKVPIVYNSENLELKEATYVVFDVETTGLSAVHNDLIQIAASKMHKGNIVEQFDEFIDPGYPLSAFTTELTGITDNHVKGAKPLVQVLQEFQEFCKGAVLVAHNATFDVGFMNANYERHQLPTISQPVIDTLEFARNLYPEYKRHGLGPLTKRFGVALDHHHMANYDAEATGRLLFIFIKDVFEKHGLTNLEQLNTELVSDDSYKKSRVKHATLYVQNQTGLKNLFKLVSLSNVSYFEGVARIPRKVLDEYREGIIVGSACADGEVFDTLLSHGIDKAVEVAKYYDFIEVMPPAIYAPLIAKDLIKDEGAIEQLIKDLIEVANRLDKPVLATGNVHYINPEDAIYREIIVRALGQGAMINRPIGKGENAQPAPLPEAHFRTTNEMLDEFAFLGKDLAYEIVVANTQAMANQIEEVEVVKKDLYTPYIDRAEEQVAEMTYAKAFELYGNPLPDIIDLRIEKELSSILGNGFAVIYLASQMLVNRSNERGYLVGSRGSVGSSFVATMIGITEVNPMPPHYLCPKCQHSEFITDGSYGSGFDLPDKECSECGTEYKKDGQDIPFETFLGFDGDKVPDIDLNFSGDDQPSAHLDVRDIFGEQYAFRAGTVGTVADRTAYGFVKGYERDYNKFYRDAEVDRLAMGVAGVKRNTGQHPGGIVVIPNYMDVYDFTPVQYPADDVTAAWQTTHFNFHDIDENVLKLDILGHDDPTMIRKLQDLSGIDPKDIRADDPDVMKLFSGTEVLGVTPEQIGTSTGVLGIPEFGTNFVRGMVEETHPTTFAELLQLSGLSHGTDVWLGNAQDLIKEGIATLKTVIGCRDDIMVYLMHAGLDPKMAFTIMERVRKGMWLKISEEERNGYIQAMRENNVPDWYIESCGKIKYMFPKAHAAAYVMMALRVAYFKVHHPIYYYCAYFSIRAKAFELKTMSAGLDAVKARMEDIKEKRQRNEATNLENDLFTTLEIVNEMLERGFTFGQLDLYKSQATEFLIEGDTLIPPFIALEGLGENVAKQLVAAREEGEFLSKTELRKRGGLSSTLVERLDEMGILGNMPEDNQLSLFDDFF.

The region spanning 426–582 (YVVFDVETTG…YDAEATGRLL (157 aa)) is the Exonuclease domain.

This sequence belongs to the DNA polymerase type-C family. PolC subfamily.

Its subcellular location is the cytoplasm. It carries out the reaction DNA(n) + a 2'-deoxyribonucleoside 5'-triphosphate = DNA(n+1) + diphosphate. In terms of biological role, required for replicative DNA synthesis. This DNA polymerase also exhibits 3' to 5' exonuclease activity. In Streptococcus thermophilus (strain ATCC BAA-491 / LMD-9), this protein is DNA polymerase III PolC-type.